A 456-amino-acid polypeptide reads, in one-letter code: Keratin, type I cytoskeletal 12 (456 aa).

Positions 1 to 19 are enriched in polar residues; the sequence is MSLSVRTSALSRRSSSQNG. The tract at residues 1–25 is disordered; the sequence is MSLSVRTSALSRRSSSQNGVAGRPW. A head region spans residues 1–114; sequence MSLSVRTSAL…GNDGGLLSGS (114 aa). Residues 115-150 form a coil 1A region; that stretch reads EKETMQNLNDRLASYLGKVRALEEANAELENKIREW. One can recognise an IF rod domain in the interval 115-402; that stretch reads EKETMQNLND…RLLEGDTQGD (288 aa). A linker 1 region spans residues 154-171; sequence RRTGDSGSQSDYSKYYPL. Positions 172–263 are coil 1B; sequence IEDLKNKIIS…KNHEEELQSF (92 aa). The interval 264–286 is linker 12; that stretch reads QAGGPGEVNVEMDAAPGVDLTKS. The tract at residues 287-397 is coil 2; the sequence is GELRKEINSN…IETYRRLLEG (111 aa). Residues 398–456 are tail; that stretch reads DTQGDGFDESLSLTVSKPQAPSVDSSKDPNKTRKIKTVVQEIVNGEVVSSQVQELEEAM. The tract at residues 405–430 is disordered; it reads DESLSLTVSKPQAPSVDSSKDPNKTR. Over residues 408-421 the composition is skewed to polar residues; it reads LSLTVSKPQAPSVD.

The protein belongs to the intermediate filament family. In terms of assembly, heterotetramer of two type I and two type II keratins. Keratin-3 associates with keratin-12.

In terms of biological role, involved in corneal epithelium organization, integrity and corneal keratin expression. This Rattus norvegicus (Rat) protein is Keratin, type I cytoskeletal 12.